The following is a 334-amino-acid chain: Ferredoxin--NADP reductase (334 aa).

FAD-binding residues include D32, Q40, Y45, V85, F120, D287, and T327.

The protein belongs to the ferredoxin--NADP reductase type 2 family. In terms of assembly, homodimer. The cofactor is FAD.

The catalysed reaction is 2 reduced [2Fe-2S]-[ferredoxin] + NADP(+) + H(+) = 2 oxidized [2Fe-2S]-[ferredoxin] + NADPH. The protein is Ferredoxin--NADP reductase of Wolbachia pipientis subsp. Culex pipiens (strain wPip).